We begin with the raw amino-acid sequence, 283 residues long: ATP synthase gamma chain (283 aa).

Belongs to the ATPase gamma chain family. In terms of assembly, F-type ATPases have 2 components, CF(1) - the catalytic core - and CF(0) - the membrane proton channel. CF(1) has five subunits: alpha(3), beta(3), gamma(1), delta(1), epsilon(1). CF(0) has three main subunits: a, b and c.

Its subcellular location is the cell membrane. In terms of biological role, produces ATP from ADP in the presence of a proton gradient across the membrane. The gamma chain is believed to be important in regulating ATPase activity and the flow of protons through the CF(0) complex. The polypeptide is ATP synthase gamma chain (Exiguobacterium sibiricum (strain DSM 17290 / CCUG 55495 / CIP 109462 / JCM 13490 / 255-15)).